The following is a 331-amino-acid chain: CRISPR-associated endonuclease Cas1 (331 aa).

Mn(2+)-binding residues include glutamate 166, histidine 228, and aspartate 243.

It belongs to the CRISPR-associated endonuclease Cas1 family. In terms of assembly, homodimer, forms a heterotetramer with a Cas2 homodimer. Mg(2+) serves as cofactor. It depends on Mn(2+) as a cofactor.

Its function is as follows. CRISPR (clustered regularly interspaced short palindromic repeat), is an adaptive immune system that provides protection against mobile genetic elements (viruses, transposable elements and conjugative plasmids). CRISPR clusters contain spacers, sequences complementary to antecedent mobile elements, and target invading nucleic acids. CRISPR clusters are transcribed and processed into CRISPR RNA (crRNA). Acts as a dsDNA endonuclease. Involved in the integration of spacer DNA into the CRISPR cassette. The protein is CRISPR-associated endonuclease Cas1 of Hyperthermus butylicus (strain DSM 5456 / JCM 9403 / PLM1-5).